The sequence spans 105 residues: Large ribosomal subunit protein uL24 (105 aa).

This sequence belongs to the universal ribosomal protein uL24 family. Part of the 50S ribosomal subunit.

In terms of biological role, one of two assembly initiator proteins, it binds directly to the 5'-end of the 23S rRNA, where it nucleates assembly of the 50S subunit. One of the proteins that surrounds the polypeptide exit tunnel on the outside of the subunit. The sequence is that of Large ribosomal subunit protein uL24 from Staphylococcus carnosus (strain TM300).